Consider the following 2081-residue polypeptide: Non-reducing polyketide synthase terA (2081 aa).

Positions 85–190 are N-terminal acylcarrier protein transacylase (SAT) domain (SAT); it reads TLTLAFRIGV…ISLDIFAPFH (106 aa). Residues 316 to 749 form the Ketosynthase family 3 (KS3) domain; sequence AQKIAIVGMA…GGNTGLLLED (434 aa). Active-site for beta-ketoacyl synthase activity residues include Cys488, His623, and His667. Positions 849–1147 are malonyl-CoA:ACP transacylase (MAT) domain; sequence LFTGQGSHYT…LTLPSLRKQE (299 aa). The interval 1230 to 1364 is N-terminal hotdog fold; the sequence is QKVIKEDFGQ…CHVEYGDIKT (135 aa). Residues 1230–1539 form the PKS/mFAS DH domain; it reads QKVIKEDFGQ…FKAIPRAVIN (310 aa). Positions 1259–1536 are product template (PT) domain; sequence VTGHLVNGSA…GVKFKAIPRA (278 aa). His1262 acts as the Proton acceptor; for dehydratase activity in catalysis. A C-terminal hotdog fold region spans residues 1392–1539; it reads YQKLDRKAAY…FKAIPRAVIN (148 aa). The active-site Proton donor; for dehydratase activity is Asp1452. The interval 1549-1578 is disordered; that stretch reads KALEKSAPRQNPKATATKTTQKPQAPVPVP. Low complexity predominate over residues 1558–1572; it reads QNPKATATKTTQKPQ. The region spanning 1580–1658 is the Carrier 1 domain; sequence KQNKAIIDDF…QVKELILKLA (79 aa). At Ser1617 the chain carries O-(pantetheine 4'-phosphoryl)serine. A disordered region spans residues 1659 to 1700; sequence GSSSDENTTDTPDEEEDPATADADNTEMIRENPLESVSPNVS. Residues 1665 to 1677 show a composition bias toward acidic residues; it reads NTTDTPDEEEDPA. The region spanning 1699–1776 is the Carrier 2 domain; it reads VSSSEAMDGF…QARLAIASLM (78 aa). Residue Ser1736 is modified to O-(pantetheine 4'-phosphoryl)serine. The disordered stretch occupies residues 1783-1809; it reads GATTPYSGSDDAKSSTSSLTAGSVLTP. The segment at 1840-2070 is thioesterase (TE) domain; the sequence is TLFLLPDGSG…TMMREPKVNQ (231 aa).

It catalyses the reaction 3 malonyl-CoA + acetyl-CoA + 2 H(+) = orsellinate + 3 CO2 + 4 CoA. Its pathway is secondary metabolite biosynthesis. In terms of biological role, non-reducing polyketide synthase; part of the gene cluster that mediates the biosynthesis of terrein, a fungal metabolite with ecological, antimicrobial, antiproliferative, and antioxidative activities. The first step in the pathway is performed by the polyketide synthase terA that produces 4-hydroxy-6-methylpyranon (4-HMP), orsellinic acid (OA), and 2,3-dehydro-6-hydroxymellein (2,3-dehydro-6-HM) by condensing acetyl-CoA with two, three, or four malonyl-CoA units, respectively. 4-HMP and OA are not pathway intermediates, but are rather shunt or side products. 2,3-dehydro-6-HM is further converted to 6-hydroxymellein (6-HM) by the 6-hydroxymellein synthase terB. The monooxygenases terC and terD, the multicopper oxidase terE and the Kelch-like protein terF are then involved in the transformation of 6-HM to terrein. Even if they are co-regulated with the other terrein cluster genes, terH and terI seem to be dispensable for terrein production; whereas one or both of the 2 transporters terG and terJ are probably required for efficient secretion of metabolites. The protein is Non-reducing polyketide synthase terA of Aspergillus terreus (strain NIH 2624 / FGSC A1156).